Reading from the N-terminus, the 296-residue chain is Cation-efflux pump FieF (296 aa).

Topologically, residues 1–18 (MTQTSQYDFWVKLASRAS) are cytoplasmic. The helical transmembrane segment at 19–32 (VATALTLITIKLLA) threads the bilayer. The Periplasmic segment spans residues 33 to 43 (WLYSGSASMLA). Residues 44–60 (SLTDSFADTLASIINFI) traverse the membrane as a helical segment. 5 residues coordinate Zn(2+): D47, D51, D70, H73, and H77. Topologically, residues 61–83 (AIRYAIVPADHDHRYGHGKAEPL) are cytoplasmic. The chain crosses the membrane as a helical span at residues 84-105 (AALAQSAFIMGSAFLLLFYGGE). At 106–119 (RLLNPSPVENATLG) the chain is on the periplasmic side. Residues 120 to 138 (VVVSVVAIVLTLALVLLQK) traverse the membrane as a helical segment. Residues 139-145 (RALAATN) are Cytoplasmic-facing. A helical transmembrane segment spans residues 146 to 160 (STVVEADSLHYKSDL). Zn(2+)-binding residues include H155 and D159. The Periplasmic segment spans residues 161-180 (FLNAAVLLALVLSQYGWWWA). A helical transmembrane segment spans residues 181 to 200 (DGLFAVLIACYIGQQAFDLG). Residues 201–296 (YRSIQALLDR…DPVQVEPTTQ (96 aa)) are Cytoplasmic-facing. H234, D235, H250, H263, H285, and D287 together coordinate Zn(2+).

Belongs to the cation diffusion facilitator (CDF) transporter (TC 2.A.4) family. FieF subfamily. Homodimer. The subunits are held together in a parallel orientation through zinc binding at the interface of the cytoplasmic domains.

It is found in the cell inner membrane. It carries out the reaction Zn(2+)(in) + H(+)(out) = Zn(2+)(out) + H(+)(in). It catalyses the reaction Cd(2+)(in) + H(+)(out) = Cd(2+)(out) + H(+)(in). The catalysed reaction is Fe(2+)(in) + H(+)(out) = Fe(2+)(out) + H(+)(in). Cytoplasmic zinc binding may trigger movements of two electrically repulsive cytoplasmic domains and reorient transmembrane helices, thereby modulating coordination geometry of the active site for zinc transport. It may modulate activity in response to cytoplasmic metal fluctuations. Its function is as follows. Divalent metal cation transporter which exports Zn(2+), Cd(2+) and possibly Fe(2+). Zn(2+)/H(+) antiporter capable of using the proton motive force to remove Zn(2+) from the cytoplasm. May be involved in zinc and iron detoxification by efflux. This Shewanella oneidensis (strain ATCC 700550 / JCM 31522 / CIP 106686 / LMG 19005 / NCIMB 14063 / MR-1) protein is Cation-efflux pump FieF.